The chain runs to 537 residues: 2-succinyl-5-enolpyruvyl-6-hydroxy-3-cyclohexene-1-carboxylate synthase (537 aa).

This sequence belongs to the TPP enzyme family. MenD subfamily. In terms of assembly, homodimer. The cofactor is Mg(2+). Requires Mn(2+) as cofactor. Thiamine diphosphate serves as cofactor.

The enzyme catalyses isochorismate + 2-oxoglutarate + H(+) = 5-enolpyruvoyl-6-hydroxy-2-succinyl-cyclohex-3-ene-1-carboxylate + CO2. It functions in the pathway quinol/quinone metabolism; 1,4-dihydroxy-2-naphthoate biosynthesis; 1,4-dihydroxy-2-naphthoate from chorismate: step 2/7. The protein operates within quinol/quinone metabolism; menaquinone biosynthesis. Catalyzes the thiamine diphosphate-dependent decarboxylation of 2-oxoglutarate and the subsequent addition of the resulting succinic semialdehyde-thiamine pyrophosphate anion to isochorismate to yield 2-succinyl-5-enolpyruvyl-6-hydroxy-3-cyclohexene-1-carboxylate (SEPHCHC). The sequence is that of 2-succinyl-5-enolpyruvyl-6-hydroxy-3-cyclohexene-1-carboxylate synthase from Dechloromonas aromatica (strain RCB).